Reading from the N-terminus, the 339-residue chain is Paired box protein Pax-9 (339 aa).

The paired DNA-binding region spans 2-128 (AFGEVNQLGG…SSISRILRNK (127 aa)). Residues 5–61 (EVNQLGGVFVNGRPLPNAIRLRIVELAQLGIRPCDISRQLRVSHGCVSKILARYNET) are PAI subdomain. An RED subdomain region spans residues 80–128 (TVVKHIRTYKQRDPGIFAWEIRDRLLADGVCDKYNVPSVSSISRILRNK).

Its subcellular location is the nucleus. The protein is Paired box protein Pax-9 (PAX9) of Gallus gallus (Chicken).